Consider the following 475-residue polypeptide: Doublecortin domain-containing protein 2 (475 aa).

Doublecortin domains lie at 17–100 (KSVL…LNYL) and 139–221 (CTIF…LPYS). Positions 234 to 475 (YGQKASSLPP…EANKASSAVA (242 aa)) are disordered. Positions 252–272 (GSGNYRQSKSTIGSSDNSSPQ) are enriched in polar residues. At serine 270 the chain carries Phosphoserine. Basic and acidic residues predominate over residues 353 to 365 (EKTSKDANQKEDF). The segment covering 407–425 (TDEENGEELDQVAEELQPT) has biased composition (acidic residues).

As to quaternary structure, interacts with DVL1, DVL2 and DVL3. Expressed in hair cells of the inner ear.

The protein resides in the cell projection. Its subcellular location is the cilium. The protein localises to the cytoplasm. It localises to the cytoskeleton. It is found in the cilium axoneme. The protein resides in the kinocilium. Its function is as follows. Protein that plays a role in the inhibition of canonical Wnt signaling pathway. May be involved in neuronal migration during development of the cerebral neocortex. Involved in the control of ciliogenesis and ciliary length. The sequence is that of Doublecortin domain-containing protein 2 (Dcdc2) from Mus musculus (Mouse).